The primary structure comprises 74 residues: Mu-conotoxin-like T3.1 (74 aa).

An N-terminal signal peptide occupies residues M1–A19. A propeptide spanning residues L20–R74 is cleaved from the precursor. 3 cysteine pairs are disulfide-bonded: C53-C65, C54-C70, and C60-C71. P57 bears the 4-hydroxyproline mark. 2 positions are modified to 4-carboxyglutamate: E58 and E64. P67 carries the 4-hydroxyproline modification. C71 carries the cysteine amide modification.

It belongs to the conotoxin M superfamily. In terms of tissue distribution, expressed by the venom duct.

Its subcellular location is the secreted. Functionally, mu-conotoxins block voltage-gated sodium channels (Nav). In vitro, this synthetic peptide displays a low blocking effect in mouse extensor digitorum longus muscles (IC(50)=616 nM). The polypeptide is Mu-conotoxin-like T3.1 (Conus tulipa (Fish-hunting cone snail)).